The following is a 120-amino-acid chain: uncharacterized protein (120 aa).

The first 19 residues, 1–19 (MTSFAVVARLITRAPRVRA), serve as a signal peptide directing secretion. Disordered stretches follow at residues 48 to 71 (VAKK…DKAK) and 90 to 120 (DTVT…KNLK). The segment covering 90–103 (DTVTGKTEETKESI) has biased composition (basic and acidic residues).

This is an uncharacterized protein from Arabidopsis thaliana (Mouse-ear cress).